A 743-amino-acid chain; its full sequence is Elongation factor 2 (743 aa).

The region spanning 19–265 (NNIRNIGIIA…MVVRHLPSPK (247 aa)) is the tr-type G domain. GTP contacts are provided by residues 28 to 35 (AHIHHGKT), 94 to 98 (DTPGH), and 148 to 151 (NKVD). Histidine 615 carries the post-translational modification Diphthamide.

This sequence belongs to the TRAFAC class translation factor GTPase superfamily. Classic translation factor GTPase family. EF-G/EF-2 subfamily.

The protein localises to the cytoplasm. In terms of biological role, catalyzes the GTP-dependent ribosomal translocation step during translation elongation. During this step, the ribosome changes from the pre-translocational (PRE) to the post-translocational (POST) state as the newly formed A-site-bound peptidyl-tRNA and P-site-bound deacylated tRNA move to the P and E sites, respectively. Catalyzes the coordinated movement of the two tRNA molecules, the mRNA and conformational changes in the ribosome. This Nanoarchaeum equitans (strain Kin4-M) protein is Elongation factor 2.